The sequence spans 648 residues: Macrolide export ATP-binding/permease protein MacB (648 aa).

The region spanning 5 to 243 (LELCNVSRSY…QGVDAAVVNT (239 aa)) is the ABC transporter domain. 41 to 48 (GVSGSGKS) contributes to the ATP binding site. A run of 5 helical transmembrane segments spans residues 273–293 (LLTM…VVVG), 417–437 (ANVV…IGVA), 523–543 (LFLT…VMNI), 578–598 (LVCL…AFML), and 611–631 (LTAL…FGWL).

Belongs to the ABC transporter superfamily. Macrolide exporter (TC 3.A.1.122) family. As to quaternary structure, homodimer. Part of the tripartite efflux system MacAB-TolC, which is composed of an inner membrane transporter, MacB, a periplasmic membrane fusion protein, MacA, and an outer membrane component, TolC. The complex forms a large protein conduit and can translocate molecules across both the inner and outer membranes. Interacts with MacA.

Its subcellular location is the cell inner membrane. Its function is as follows. Part of the tripartite efflux system MacAB-TolC. MacB is a non-canonical ABC transporter that contains transmembrane domains (TMD), which form a pore in the inner membrane, and an ATP-binding domain (NBD), which is responsible for energy generation. Confers resistance against macrolides. This chain is Macrolide export ATP-binding/permease protein MacB, found in Salmonella paratyphi A (strain ATCC 9150 / SARB42).